A 125-amino-acid chain; its full sequence is uncharacterized protein (125 aa).

The protein resides in the plastid. This is an uncharacterized protein from Euglena longa (Euglenophycean alga).